A 134-amino-acid polypeptide reads, in one-letter code: uncharacterized protein (134 aa).

The protein resides in the mitochondrion. This is an uncharacterized protein from Saccharomyces cerevisiae (strain ATCC 204508 / S288c) (Baker's yeast).